Reading from the N-terminus, the 276-residue chain is NH(3)-dependent NAD(+) synthetase (276 aa).

47-54 serves as a coordination point for ATP; that stretch reads GISGGQDS. A Mg(2+)-binding site is contributed by aspartate 53. Deamido-NAD(+) is bound at residue arginine 141. Threonine 161 is an ATP binding site. Residue glutamate 166 coordinates Mg(2+). The deamido-NAD(+) site is built by lysine 174 and aspartate 181. Residues lysine 190 and threonine 212 each contribute to the ATP site. 261–262 lines the deamido-NAD(+) pocket; sequence HK.

This sequence belongs to the NAD synthetase family. In terms of assembly, homodimer.

The enzyme catalyses deamido-NAD(+) + NH4(+) + ATP = AMP + diphosphate + NAD(+) + H(+). Its pathway is cofactor biosynthesis; NAD(+) biosynthesis; NAD(+) from deamido-NAD(+) (ammonia route): step 1/1. Its function is as follows. Catalyzes the ATP-dependent amidation of deamido-NAD to form NAD. Uses ammonia as a nitrogen source. The polypeptide is NH(3)-dependent NAD(+) synthetase (Levilactobacillus brevis (strain ATCC 367 / BCRC 12310 / CIP 105137 / JCM 1170 / LMG 11437 / NCIMB 947 / NCTC 947) (Lactobacillus brevis)).